Reading from the N-terminus, the 440-residue chain is 23S rRNA (uracil(1939)-C(5))-methyltransferase RlmD (440 aa).

Residues 1–21 (MRRRTSPRRTTTSKPQPIGPI) are disordered. The 59-residue stretch at 15 to 73 (PQPIGPIQTFEVDGLTHEAKGVARLQGKVTFIEGALPGETVEAQVNKAGRRFDEAVLVN) folds into the TRAM domain. Residues C86, C92, C95, and C169 each coordinate [4Fe-4S] cluster. Q273, F302, N307, E323, D350, and D370 together coordinate S-adenosyl-L-methionine. C396 serves as the catalytic Nucleophile.

The protein belongs to the class I-like SAM-binding methyltransferase superfamily. RNA M5U methyltransferase family. RlmD subfamily.

The enzyme catalyses uridine(1939) in 23S rRNA + S-adenosyl-L-methionine = 5-methyluridine(1939) in 23S rRNA + S-adenosyl-L-homocysteine + H(+). Catalyzes the formation of 5-methyl-uridine at position 1939 (m5U1939) in 23S rRNA. The polypeptide is 23S rRNA (uracil(1939)-C(5))-methyltransferase RlmD (Marinomonas sp. (strain MWYL1)).